The primary structure comprises 404 residues: Chorismate synthase (404 aa).

2 residues coordinate NADP(+): Arg43 and Arg49. Residues 138–140 (RAS), 259–260 (QA), Gly303, 318–322 (KPIST), and Arg344 contribute to the FMN site.

The protein belongs to the chorismate synthase family. Homotetramer. FMNH2 is required as a cofactor.

It carries out the reaction 5-O-(1-carboxyvinyl)-3-phosphoshikimate = chorismate + phosphate. It functions in the pathway metabolic intermediate biosynthesis; chorismate biosynthesis; chorismate from D-erythrose 4-phosphate and phosphoenolpyruvate: step 7/7. Catalyzes the anti-1,4-elimination of the C-3 phosphate and the C-6 proR hydrogen from 5-enolpyruvylshikimate-3-phosphate (EPSP) to yield chorismate, which is the branch point compound that serves as the starting substrate for the three terminal pathways of aromatic amino acid biosynthesis. This reaction introduces a second double bond into the aromatic ring system. This is Chorismate synthase from Mycolicibacterium paratuberculosis (strain ATCC BAA-968 / K-10) (Mycobacterium paratuberculosis).